A 1399-amino-acid chain; its full sequence is DNA-directed RNA polymerase subunit beta' (1399 aa).

Zn(2+)-binding residues include Cys-70, Cys-72, Cys-85, and Cys-88. Mg(2+) is bound by residues Asp-460, Asp-462, and Asp-464. The Zn(2+) site is built by Cys-814, Cys-888, Cys-895, and Cys-898.

This sequence belongs to the RNA polymerase beta' chain family. As to quaternary structure, the RNAP catalytic core consists of 2 alpha, 1 beta, 1 beta' and 1 omega subunit. When a sigma factor is associated with the core the holoenzyme is formed, which can initiate transcription. Requires Mg(2+) as cofactor. The cofactor is Zn(2+).

It carries out the reaction RNA(n) + a ribonucleoside 5'-triphosphate = RNA(n+1) + diphosphate. In terms of biological role, DNA-dependent RNA polymerase catalyzes the transcription of DNA into RNA using the four ribonucleoside triphosphates as substrates. In Pseudomonas savastanoi pv. phaseolicola (strain 1448A / Race 6) (Pseudomonas syringae pv. phaseolicola (strain 1448A / Race 6)), this protein is DNA-directed RNA polymerase subunit beta'.